We begin with the raw amino-acid sequence, 262 residues long: Acyl-[acyl-carrier-protein]--UDP-N-acetylglucosamine O-acyltransferase (262 aa).

It belongs to the transferase hexapeptide repeat family. LpxA subfamily. In terms of assembly, homotrimer.

The protein resides in the cytoplasm. It carries out the reaction a (3R)-hydroxyacyl-[ACP] + UDP-N-acetyl-alpha-D-glucosamine = a UDP-3-O-[(3R)-3-hydroxyacyl]-N-acetyl-alpha-D-glucosamine + holo-[ACP]. The protein operates within glycolipid biosynthesis; lipid IV(A) biosynthesis; lipid IV(A) from (3R)-3-hydroxytetradecanoyl-[acyl-carrier-protein] and UDP-N-acetyl-alpha-D-glucosamine: step 1/6. Functionally, involved in the biosynthesis of lipid A, a phosphorylated glycolipid that anchors the lipopolysaccharide to the outer membrane of the cell. This is Acyl-[acyl-carrier-protein]--UDP-N-acetylglucosamine O-acyltransferase from Salmonella dublin (strain CT_02021853).